A 474-amino-acid chain; its full sequence is MPREIITLQVGQCGNQIGMEFWKQLCLEHGISKDGILEDFATQGGDRKDVFFYQADDQHYIPRALLIDLEPRVINGIQNGDYRNLYNHENIFVADHGGGAGNNWASGYHQGKGVEEEIMDMIDREADGSDSLEGFVLCHSIAGGTGSGMGSYLLETLNDRYSKKLVQTYSVFPNQMETSDVVVQPYNSLLTLKRLTLNADCVVVLDNTALGRIAVERLHLTNPTFAQTNSLVSTVMSASTTTLRYPGYMNNDLVGLLASLIPTPRCHFLMTGYTPLTVERQANVIRKTTVLDVMRRLLQTKNIMVSSYARNKEASQAKYISILNIIQGEVDPTQVHESLQRIRERKLVNFIEWGPASIQVALSKKSPYVQTAHRVSGLMLASHTSIRHLFSKCLSQYDKLRKKQAFLDNYRKFPMFADNDLSEFDESRDIIESLVDEYKACESPDYIKWGMEDPEQLMTGEGNASGVVDPKLAF.

GTP is bound at residue 142–148; the sequence is AGGTGSG.

This sequence belongs to the tubulin family. In terms of assembly, gamma-tubulin complex is composed of gamma-tubulin and GCP proteins.

Its subcellular location is the cytoplasm. The protein resides in the cytoskeleton. It localises to the microtubule organizing center. It is found in the nucleus. The protein localises to the cell cortex. Its function is as follows. Tubulin is the major constituent of microtubules. The gamma chain is found at microtubule organizing centers (MTOC) such as the spindle poles, suggesting that it is involved in the minus-end nucleation of microtubule assembly. Functionally, gamma-tubulin complex is essential for the control of microtubular network remodeling in the course of initiation and development of giant-feeding cells, and for the successful reproduction of nematodes (e.g. Meloidogyne spp.) in their plant hosts. This Arabidopsis thaliana (Mouse-ear cress) protein is Tubulin gamma-1 chain (TUBG1).